The chain runs to 483 residues: Glutamyl-tRNA(Gln) amidotransferase subunit A (483 aa).

Active-site charge relay system residues include lysine 76 and serine 151. Residue serine 175 is the Acyl-ester intermediate of the active site.

It belongs to the amidase family. GatA subfamily. In terms of assembly, heterotrimer of A, B and C subunits.

It carries out the reaction L-glutamyl-tRNA(Gln) + L-glutamine + ATP + H2O = L-glutaminyl-tRNA(Gln) + L-glutamate + ADP + phosphate + H(+). Allows the formation of correctly charged Gln-tRNA(Gln) through the transamidation of misacylated Glu-tRNA(Gln) in organisms which lack glutaminyl-tRNA synthetase. The reaction takes place in the presence of glutamine and ATP through an activated gamma-phospho-Glu-tRNA(Gln). This is Glutamyl-tRNA(Gln) amidotransferase subunit A from Pseudomonas syringae pv. tomato (strain ATCC BAA-871 / DC3000).